The following is a 255-amino-acid chain: Imidazole glycerol phosphate synthase subunit HisF (255 aa).

Active-site residues include aspartate 11 and aspartate 130.

Belongs to the HisA/HisF family. In terms of assembly, heterodimer of HisH and HisF.

The protein localises to the cytoplasm. The catalysed reaction is 5-[(5-phospho-1-deoxy-D-ribulos-1-ylimino)methylamino]-1-(5-phospho-beta-D-ribosyl)imidazole-4-carboxamide + L-glutamine = D-erythro-1-(imidazol-4-yl)glycerol 3-phosphate + 5-amino-1-(5-phospho-beta-D-ribosyl)imidazole-4-carboxamide + L-glutamate + H(+). It functions in the pathway amino-acid biosynthesis; L-histidine biosynthesis; L-histidine from 5-phospho-alpha-D-ribose 1-diphosphate: step 5/9. IGPS catalyzes the conversion of PRFAR and glutamine to IGP, AICAR and glutamate. The HisF subunit catalyzes the cyclization activity that produces IGP and AICAR from PRFAR using the ammonia provided by the HisH subunit. This is Imidazole glycerol phosphate synthase subunit HisF from Campylobacter jejuni subsp. jejuni serotype O:6 (strain 81116 / NCTC 11828).